We begin with the raw amino-acid sequence, 266 residues long: Putative carbamate hydrolase RutD (266 aa).

This sequence belongs to the AB hydrolase superfamily. Hydrolase RutD family.

The enzyme catalyses carbamate + 2 H(+) = NH4(+) + CO2. Functionally, involved in pyrimidine catabolism. May facilitate the hydrolysis of carbamate, a reaction that can also occur spontaneously. This is Putative carbamate hydrolase RutD from Escherichia coli O103:H2 (strain 12009 / EHEC).